The primary structure comprises 459 residues: Bifunctional protein GlmU (459 aa).

The tract at residues 1–230 (MSNRFAVILA…FDETLGVNDR (230 aa)) is pyrophosphorylase. UDP-N-acetyl-alpha-D-glucosamine contacts are provided by residues 9–12 (LAAG), lysine 23, glutamine 73, and 78–79 (GT). Aspartate 103 serves as a coordination point for Mg(2+). Positions 140, 155, 170, and 228 each coordinate UDP-N-acetyl-alpha-D-glucosamine. Asparagine 228 is a Mg(2+) binding site. The interval 231–251 (VALSQAEVIMKNRINHKNMVN) is linker. The tract at residues 252-459 (GVTIIDPSNT…VDQLLNKKKS (208 aa)) is N-acetyltransferase. Residues arginine 333 and lysine 351 each coordinate UDP-N-acetyl-alpha-D-glucosamine. The Proton acceptor role is filled by histidine 363. 2 residues coordinate UDP-N-acetyl-alpha-D-glucosamine: tyrosine 366 and asparagine 377. Acetyl-CoA is bound by residues 386–387 (NY), alanine 423, and arginine 440.

This sequence in the N-terminal section; belongs to the N-acetylglucosamine-1-phosphate uridyltransferase family. The protein in the C-terminal section; belongs to the transferase hexapeptide repeat family. As to quaternary structure, homotrimer. The cofactor is Mg(2+).

The protein resides in the cytoplasm. It catalyses the reaction alpha-D-glucosamine 1-phosphate + acetyl-CoA = N-acetyl-alpha-D-glucosamine 1-phosphate + CoA + H(+). It carries out the reaction N-acetyl-alpha-D-glucosamine 1-phosphate + UTP + H(+) = UDP-N-acetyl-alpha-D-glucosamine + diphosphate. The protein operates within nucleotide-sugar biosynthesis; UDP-N-acetyl-alpha-D-glucosamine biosynthesis; N-acetyl-alpha-D-glucosamine 1-phosphate from alpha-D-glucosamine 6-phosphate (route II): step 2/2. It functions in the pathway nucleotide-sugar biosynthesis; UDP-N-acetyl-alpha-D-glucosamine biosynthesis; UDP-N-acetyl-alpha-D-glucosamine from N-acetyl-alpha-D-glucosamine 1-phosphate: step 1/1. It participates in bacterial outer membrane biogenesis; LPS lipid A biosynthesis. In terms of biological role, catalyzes the last two sequential reactions in the de novo biosynthetic pathway for UDP-N-acetylglucosamine (UDP-GlcNAc). The C-terminal domain catalyzes the transfer of acetyl group from acetyl coenzyme A to glucosamine-1-phosphate (GlcN-1-P) to produce N-acetylglucosamine-1-phosphate (GlcNAc-1-P), which is converted into UDP-GlcNAc by the transfer of uridine 5-monophosphate (from uridine 5-triphosphate), a reaction catalyzed by the N-terminal domain. This is Bifunctional protein GlmU from Bacillus cytotoxicus (strain DSM 22905 / CIP 110041 / 391-98 / NVH 391-98).